The primary structure comprises 202 residues: Putative pituitary tumor-transforming gene 3 protein (202 aa).

A D-box motif is present at residues 61 to 64 (RKAL). Residues 67–92 (VNRATEKSVKTNGPLKQKQPSFSAKK) are disordered. The SH3-binding motif lies at 163-173 (PPLPLKMPSPP).

The protein belongs to the securin family.

It is found in the cytoplasm. The protein resides in the nucleus. In Pongo pygmaeus (Bornean orangutan), this protein is Putative pituitary tumor-transforming gene 3 protein (PTTG3).